The sequence spans 411 residues: Thyroxine-binding globulin (411 aa).

The N-terminal stretch at 1–15 is a signal peptide; that stretch reads MPLFSLVLLILGLHC. N-linked (GlcNAc...) asparagine glycans are attached at residues N34, N97, N163, and N251. Positions 291 and 394 each coordinate thyroxine.

This sequence belongs to the serpin family. In terms of tissue distribution, expressed by the liver and secreted in plasma.

It is found in the secreted. In terms of biological role, major thyroid hormone transport protein in serum. The protein is Thyroxine-binding globulin (SERPINA7) of Bos taurus (Bovine).